The chain runs to 362 residues: Fructose-bisphosphate aldolase (362 aa).

Ser-65 serves as a coordination point for D-glyceraldehyde 3-phosphate. Asp-112 (proton donor) is an active-site residue. Positions 113, 147, 177, and 229 each coordinate Zn(2+). Gly-230 provides a ligand contact to dihydroxyacetone phosphate. Residue His-268 participates in Zn(2+) binding. Residues 269–271 and 290–293 each bind dihydroxyacetone phosphate; these read GGS and NVDT.

It belongs to the class II fructose-bisphosphate aldolase family. In terms of assembly, homodimer. It depends on Zn(2+) as a cofactor.

It carries out the reaction beta-D-fructose 1,6-bisphosphate = D-glyceraldehyde 3-phosphate + dihydroxyacetone phosphate. The protein operates within carbohydrate degradation; glycolysis; D-glyceraldehyde 3-phosphate and glycerone phosphate from D-glucose: step 4/4. Its function is as follows. Catalyzes the aldol condensation of dihydroxyacetone phosphate (DHAP or glycerone-phosphate) with glyceraldehyde 3-phosphate (G3P) to form fructose 1,6-bisphosphate (FBP) in gluconeogenesis and the reverse reaction in glycolysis. The protein is Fructose-bisphosphate aldolase (fbaA) of Aspergillus oryzae (strain ATCC 42149 / RIB 40) (Yellow koji mold).